A 259-amino-acid polypeptide reads, in one-letter code: MATEAHDAGGATGYIVHHLTPLSSGEGFWTLHVDTLFFSVFLGAVFLFFFRKAAEQATAGVPGPFQNFVEMIVEFVDTQVKDSFHGRNALIAPLALSIFAWVFLMNAMDLLPVDLLPDVGKAIGLEYLRVVPSTDLNATFGMSISVFFLIIFYSLKVKGPGHFAMEFLFHPFSHWALVPFNLLLNTVEYLAKPVSLGLRLFGNMYAGELIFILIALLPWWVQPALSFPWAVFHILIITLQAFIFMVLTIVYLSLAHESH.

The next 5 membrane-spanning stretches (helical) occupy residues 30–50, 90–110, 135–155, 209–229, and 230–250; these read TLHVDTLFFSVFLGAVFLFFF, LIAPLALSIFAWVFLMNAMDL, DLNATFGMSISVFFLIIFYSL, LIFILIALLPWWVQPALSFPW, and AVFHILIITLQAFIFMVLTIV.

It belongs to the ATPase A chain family. In terms of assembly, F-type ATPases have 2 components, CF(1) - the catalytic core - and CF(0) - the membrane proton channel. CF(1) has five subunits: alpha(3), beta(3), gamma(1), delta(1), epsilon(1). CF(0) has three main subunits: a(1), b(2) and c(9-12). The alpha and beta chains form an alternating ring which encloses part of the gamma chain. CF(1) is attached to CF(0) by a central stalk formed by the gamma and epsilon chains, while a peripheral stalk is formed by the delta and b chains.

It is found in the cell inner membrane. Functionally, key component of the proton channel; it plays a direct role in the translocation of protons across the membrane. The chain is ATP synthase subunit a 1 from Methylococcus capsulatus (strain ATCC 33009 / NCIMB 11132 / Bath).